The chain runs to 508 residues: 2,3-bisphosphoglycerate-independent phosphoglycerate mutase (508 aa).

2 residues coordinate Mn(2+): Asp-11 and Ser-61. Ser-61 functions as the Phosphoserine intermediate in the catalytic mechanism. Substrate-binding positions include His-122, 150–151, Arg-182, Arg-188, 257–260, and Lys-332; these read RD and RPDR. Mn(2+) contacts are provided by Asp-397, His-401, Asp-438, His-439, and His-456.

It belongs to the BPG-independent phosphoglycerate mutase family. Monomer. Mn(2+) is required as a cofactor.

The enzyme catalyses (2R)-2-phosphoglycerate = (2R)-3-phosphoglycerate. It participates in carbohydrate degradation; glycolysis; pyruvate from D-glyceraldehyde 3-phosphate: step 3/5. Catalyzes the interconversion of 2-phosphoglycerate and 3-phosphoglycerate. The sequence is that of 2,3-bisphosphoglycerate-independent phosphoglycerate mutase from Mycoplasma pneumoniae (strain ATCC 29342 / M129 / Subtype 1) (Mycoplasmoides pneumoniae).